Consider the following 1126-residue polypeptide: Probable serine/threonine-protein kinase DDB_G0280111 (1126 aa).

Residues 16 to 295 (LNFVKQIAEG…NLLRNQQPLF (280 aa)) form the Protein kinase domain. Residues 22-30 (IAEGGFSYV) and K45 contribute to the ATP site. The active-site Proton acceptor is D147. A compositionally biased stretch (low complexity) spans 314–333 (NNNNNINNNNNNNIVNGKNI). Disordered stretches follow at residues 314 to 469 (NNNN…NGNN), 760 to 901 (LNLN…QQQQ), 944 to 1072 (TPSS…DEVR), and 1095 to 1126 (NKQSRMNNPNNLFDEGDSGFGDGEEEDEGLLN). Residues 347-364 (TPTPPPPAPSQSPSPSPS) are compositionally biased toward pro residues. Residues 367–390 (VVNNIENNSNGLEHSNSNGNISQP) show a composition bias toward polar residues. 3 stretches are compositionally biased toward low complexity: residues 413–422 (PPNNSNNSFD), 432–469 (NLSNNPFNVNSNDNSNSSNNNNNNNNNNNNNNNNNGNN), and 760–795 (LNLNNNNNNNNNSNNSNNSNNSNSGNLSGNASLNSS). Polar residues-rich tracts occupy residues 796–825 (FDNINSSNPFSTEPTFNPFSATTTNTSESG) and 833–845 (EPTSNPSPRYQQS). Over residues 846–856 (NNNNNNNNNNN) the composition is skewed to low complexity. Over residues 857–866 (GTPISLTPGS) the composition is skewed to polar residues. Composition is skewed to low complexity over residues 886–901 (QQQQHPQQQQQQQQQQ), 953–971 (PSTGPTTAAQQQQQQQQSQ), and 1003–1035 (NVNINNNNNSHVSAPHSLNSSSSSISSISNPNL). Residues 1095–1105 (NKQSRMNNPNN) are compositionally biased toward polar residues. Over residues 1108-1126 (DEGDSGFGDGEEEDEGLLN) the composition is skewed to acidic residues.

The protein belongs to the protein kinase superfamily. Ser/Thr protein kinase family.

The enzyme catalyses L-seryl-[protein] + ATP = O-phospho-L-seryl-[protein] + ADP + H(+). It catalyses the reaction L-threonyl-[protein] + ATP = O-phospho-L-threonyl-[protein] + ADP + H(+). The polypeptide is Probable serine/threonine-protein kinase DDB_G0280111 (Dictyostelium discoideum (Social amoeba)).